The primary structure comprises 1030 residues: Subtilin biosynthesis protein SpaB (1030 aa).

To S.epidermidis EpiB and L.lactis NisB.

The protein localises to the cell membrane. Involved in the post-translational modification of the lantibiotic subtilin. The chain is Subtilin biosynthesis protein SpaB (spaB) from Bacillus subtilis.